Reading from the N-terminus, the 804-residue chain is Probable replication endonuclease from prophage-like region 1 (804 aa).

Residues Tyr-498 and Tyr-502 each act as O-(5'-phospho-DNA)-tyrosine intermediate in the active site.

The protein belongs to the phage GPA family.

Functionally, possible endonuclease which induces a single-strand cut and initiates DNA replication. The protein is Probable replication endonuclease from prophage-like region 1 of Salmonella typhi.